The sequence spans 349 residues: Anthranilate phosphoribosyltransferase (349 aa).

5-phospho-alpha-D-ribose 1-diphosphate contacts are provided by residues G82, 85–86 (GD), 92–95 (NVSS), 110–118 (KHGNRAVSG), and S122. G82 is an anthranilate binding site. A Mg(2+)-binding site is contributed by S94. Position 113 (N113) interacts with anthranilate. Residue R168 coordinates anthranilate. Mg(2+) contacts are provided by D227 and E228.

The protein belongs to the anthranilate phosphoribosyltransferase family. As to quaternary structure, homodimer. The cofactor is Mg(2+).

The enzyme catalyses N-(5-phospho-beta-D-ribosyl)anthranilate + diphosphate = 5-phospho-alpha-D-ribose 1-diphosphate + anthranilate. It functions in the pathway amino-acid biosynthesis; L-tryptophan biosynthesis; L-tryptophan from chorismate: step 2/5. Its function is as follows. Catalyzes the transfer of the phosphoribosyl group of 5-phosphorylribose-1-pyrophosphate (PRPP) to anthranilate to yield N-(5'-phosphoribosyl)-anthranilate (PRA). The protein is Anthranilate phosphoribosyltransferase of Pseudomonas paraeruginosa (strain DSM 24068 / PA7) (Pseudomonas aeruginosa (strain PA7)).